Consider the following 95-residue polypeptide: Co-chaperonin GroES (95 aa).

The protein belongs to the GroES chaperonin family. Heptamer of 7 subunits arranged in a ring. Interacts with the chaperonin GroEL.

The protein localises to the cytoplasm. In terms of biological role, together with the chaperonin GroEL, plays an essential role in assisting protein folding. The GroEL-GroES system forms a nano-cage that allows encapsulation of the non-native substrate proteins and provides a physical environment optimized to promote and accelerate protein folding. GroES binds to the apical surface of the GroEL ring, thereby capping the opening of the GroEL channel. The protein is Co-chaperonin GroES of Staphylococcus haemolyticus (strain JCSC1435).